Here is a 583-residue protein sequence, read N- to C-terminus: MLKRFIFLLVGITLTLSAHAGLFGNDQPKYLSGAEAFAFSATPKSDKQIELNWQIADGYYLYKKEIQVTPQNAEIQPLAFPAAENYHDEFFGEVEIFRNQLTLPITFSAEQANASLSVHYQGCTKGFCYPPETVTVSLDGQQAVDSAQNVAKNRENSTASQPLANAPKAEQDQLAENLANNRLSIFWFFLLGIGLAFTPCVLPMLPLLSAIVIGNKQRPNTFKALLLSFAYVQGMALTYTLLGLVVAAIGLPFQVALQSPPVLISLAILFTILAASMFGLFEIRLPNSWQQKLNAMSQKQQGGAFGSVFVMGMIAGLVASPCTSAPLSGALLYVAQSGDLLTGGLALYLLALGMGIPLILITLFGNRILPKSGDWLLKVKTAFGFVMLALPVFLLSRILPSHYEPLMWSALAMVFVGWLISVIPTQGVIKQAVRIVLFLTFAVASYPWANLVWNQGNSSHSAQVSNHLAFERVQSLAELQEKLTASQGKKVMLDLYADWCVACKEFEKYTFTDQAVQQKLAEMVVLQVDMTNNSAQNDELMKHFNVLGLPTILFFDESGKELTQSRVTGFLEANQFLNWLNQL.

The first 20 residues, 1 to 20 (MLKRFIFLLVGITLTLSAHA), serve as a signal peptide directing secretion. 2 disulfides stabilise this stretch: C123/C128 and C200/C322. 8 consecutive transmembrane segments (helical) span residues 185–205 (IFWF…LPML), 237–257 (LTYT…QVAL), 261–281 (PVLI…FGLF), 302–322 (GGAF…ASPC), 344–364 (GLAL…ITLF), 375–395 (WLLK…VFLL), 405–425 (PLMW…VIPT), and 433–453 (VRIV…NLVW). Residues 440–583 (TFAVASYPWA…NQFLNWLNQL (144 aa)) enclose the Thioredoxin domain. A disulfide bridge links C500 with C503.

Belongs to the thioredoxin family. DsbD subfamily.

The protein resides in the cell inner membrane. It catalyses the reaction [protein]-dithiol + NAD(+) = [protein]-disulfide + NADH + H(+). The catalysed reaction is [protein]-dithiol + NADP(+) = [protein]-disulfide + NADPH + H(+). Required to facilitate the formation of correct disulfide bonds in some periplasmic proteins and for the assembly of the periplasmic c-type cytochromes. Acts by transferring electrons from cytoplasmic thioredoxin to the periplasm. This transfer involves a cascade of disulfide bond formation and reduction steps. In Actinobacillus pleuropneumoniae serotype 5b (strain L20), this protein is Thiol:disulfide interchange protein DsbD.